The sequence spans 112 residues: Evasin P1095 (112 aa).

Positions 1–23 (MELNAFTILQIAVFIAVGYHANT) are cleaved as a signal peptide. 3 cysteine pairs are disulfide-bonded: Cys48–Cys66, Cys52–Cys68, and Cys62–Cys79. Asn51 is a glycosylation site (N-linked (GlcNAc...) asparagine). A disordered region spans residues 89–112 (GDPNDDPKINEATPQTQIFEKKRK).

It localises to the secreted. Salivary chemokine-binding protein which binds to host chemokine CXCL8. The polypeptide is Evasin P1095 (Ixodes ricinus (Common tick)).